The sequence spans 674 residues: MASTSAATPLKNKRKFENGKKKPKTLKDEFGEKLDIKPVIVPPKPADEYDYDSSDEEDLRNTIGNIPIKWYDDEDHIGYDKFGEKIAKPAKKGEIETFLEKMEDPDYWRKVFDKQTGTDVKLTDEQIEKIHNIATGKYPTIGYNPYEPFLDIFSSQKEIHPIDNRPEPKSRFIPSKDEMRMVSRMVHAIKMGWAKGPRAKKEEHKSYDLWASEDALDNVTKSQLSRMRVHMPAPKVALPTHAESYNPPEEYIFDDEERKKWEEAEKEDRVLNFMPSKYDALRKVPQYDKFITERFERCLDLYLAPRQRKMRIHADPTDLLPDLPNPNDLRPFPTTLAFYMRGHTGQVRAITVEPERGELLASGGEDGTVRIWMIATGRCIKTFQMDGEVTSVSFSPVADRTLLAVAYEGKYVAILNTGCGDRLHVQQTEALLAETPTDAQEDGAVVTWRKSKEKLMLKMPNEVRQVTWHSKGDYFASVAIDDIAKSVYVHQLSKAKSQCPFQKRKGHVQAVTFHPTQARLFVATKIHVREYDLARCVLVKKLITGCKHISTMATDANGENLFLGGLDRRFCWMDLQMGNKPWKKLKHHTAAVRSVAYHKKYPLLATVSDDGTAMVYYARIYTDFVKDNELYPVKRLRAHEKTPNDLCMLHTTWHPTQPWLITAGADGTIALFTY.

The disordered stretch occupies residues 1–28 (MASTSAATPLKNKRKFENGKKKPKTLKD). The segment covering 15-28 (KFENGKKKPKTLKD) has biased composition (basic and acidic residues). WD repeat units follow at residues 342-384 (GHTG…KTFQ), 386-425 (DGEVTSVSFSPVADRTLLAVAYEGKYVAILNTGCGDRLHV), 427-458 (QTEALLAETPTDAQEDGAVVTWRKSKEKLMLK), 459-500 (MPNE…SQCP), 503-541 (KRKGHVQAVTFHPTQARLFVATKIHVREYDLARCVLVKK), 587-626 (HHTAAVRSVAYHKKYPLLATVSDDGTAMVYYARIYTDFVK), and 643-674 (PNDLCMLHTTWHPTQPWLITAGADGTIALFTY).

It belongs to the WD repeat BOP1/ERB1 family.

It is found in the nucleus. The protein localises to the nucleolus. Its subcellular location is the nucleoplasm. In terms of biological role, required for maturation of ribosomal RNAs and formation of the large ribosomal subunit. The chain is Ribosome biogenesis protein BOP1 homolog from Caenorhabditis elegans.